Consider the following 560-residue polypeptide: Dihydroxy-acid dehydratase (560 aa).

Asp-80 provides a ligand contact to Mg(2+). Cys-121 contributes to the [2Fe-2S] cluster binding site. 2 residues coordinate Mg(2+): Asp-122 and Lys-123. The residue at position 123 (Lys-123) is an N6-carboxylysine. A [2Fe-2S] cluster-binding site is contributed by Cys-194. Residue Glu-447 participates in Mg(2+) binding. Residue Ser-473 is the Proton acceptor of the active site.

Belongs to the IlvD/Edd family. Homodimer. Requires [2Fe-2S] cluster as cofactor. It depends on Mg(2+) as a cofactor.

The catalysed reaction is (2R)-2,3-dihydroxy-3-methylbutanoate = 3-methyl-2-oxobutanoate + H2O. The enzyme catalyses (2R,3R)-2,3-dihydroxy-3-methylpentanoate = (S)-3-methyl-2-oxopentanoate + H2O. It participates in amino-acid biosynthesis; L-isoleucine biosynthesis; L-isoleucine from 2-oxobutanoate: step 3/4. Its pathway is amino-acid biosynthesis; L-valine biosynthesis; L-valine from pyruvate: step 3/4. Its function is as follows. Functions in the biosynthesis of branched-chain amino acids. Catalyzes the dehydration of (2R,3R)-2,3-dihydroxy-3-methylpentanoate (2,3-dihydroxy-3-methylvalerate) into 2-oxo-3-methylpentanoate (2-oxo-3-methylvalerate) and of (2R)-2,3-dihydroxy-3-methylbutanoate (2,3-dihydroxyisovalerate) into 2-oxo-3-methylbutanoate (2-oxoisovalerate), the penultimate precursor to L-isoleucine and L-valine, respectively. The chain is Dihydroxy-acid dehydratase from Chloroherpeton thalassium (strain ATCC 35110 / GB-78).